Here is a 201-residue protein sequence, read N- to C-terminus: 3-isopropylmalate dehydratase small subunit (201 aa).

It belongs to the LeuD family. LeuD type 1 subfamily. As to quaternary structure, heterodimer of LeuC and LeuD.

It carries out the reaction (2R,3S)-3-isopropylmalate = (2S)-2-isopropylmalate. It functions in the pathway amino-acid biosynthesis; L-leucine biosynthesis; L-leucine from 3-methyl-2-oxobutanoate: step 2/4. Functionally, catalyzes the isomerization between 2-isopropylmalate and 3-isopropylmalate, via the formation of 2-isopropylmaleate. This Sinorhizobium fredii (strain NBRC 101917 / NGR234) protein is 3-isopropylmalate dehydratase small subunit.